Here is a 615-residue protein sequence, read N- to C-terminus: Fibrinogen alpha chain (615 aa).

A signal peptide spans 1 to 19; it reads MFSVRDLCLVLSLVGAIKT. Positions 71-602 form a coiled coil; sequence CRMKGLIDEV…GHTKARPARG (532 aa). The segment at 267 to 427 is disordered; that stretch reads FGGDGHARGD…TKQEFHTGKL (161 aa). Polar residues predominate over residues 293–302; that stretch reads GTSSIGNVNP. T325 is a glycosylation site (O-linked (GalNAc...) threonine). Over residues 373 to 396 the composition is skewed to low complexity; it reads GSAGTWNTGSSGSSSFRPDSSGHG. The cysteines at positions 455 and 485 are disulfide-linked. The tract at residues 530-615 is disordered; the sequence is EFAALGESGS…SPLGEPSLTP (86 aa). Over residues 537–549 the composition is skewed to low complexity; sequence SGSSSSKTSTHSK. The span at 550–560 shows a compositional bias: polar residues; that stretch reads QFVSSSTTVNR. Residues 591 to 601 show a composition bias toward basic residues; that stretch reads QKGHTKARPAR.

Heterohexamer; disulfide linked. Contains 2 sets of 3 non-identical chains (alpha, beta and gamma). The 2 heterotrimers are in head to head conformation with the N-termini in a small central domain. Post-translationally, conversion of fibrinogen to fibrin is triggered by thrombin, which cleaves fibrinopeptides A and B from alpha and beta chains, and thus exposes the N-terminal polymerization sites responsible for the formation of the soft clot. The soft clot is converted into the hard clot by factor XIIIA which catalyzes the epsilon-(gamma-glutamyl)lysine cross-linking between gamma chains (stronger) and between alpha chains (weaker) of different monomers. Forms F13A-mediated cross-links between a glutamine and the epsilon-amino group of a lysine residue, forming fibronectin-fibrinogen heteropolymers.

It is found in the secreted. Cleaved by the protease thrombin to yield monomers which, together with fibrinogen beta (FGB) and fibrinogen gamma (FGG), polymerize to form an insoluble fibrin matrix. Fibrin has a major function in hemostasis as one of the primary components of blood clots. In addition, functions during the early stages of wound repair to stabilize the lesion and guide cell migration during re-epithelialization. Was originally thought to be essential for platelet aggregation, based on in vitro studies using anticoagulated blood. However, subsequent studies have shown that it is not absolutely required for thrombus formation in vivo. Enhances expression of SELP in activated platelets via an ITGB3-dependent pathway. Maternal fibrinogen is essential for successful pregnancy. Fibrin deposition is also associated with infection, where it protects against IFNG-mediated hemorrhage. May also facilitate the immune response via both innate and T-cell mediated pathways. In Bos taurus (Bovine), this protein is Fibrinogen alpha chain (FGA).